We begin with the raw amino-acid sequence, 72 residues long: Translation initiation factor IF-1 (72 aa).

One can recognise an S1-like domain in the interval 1–72; the sequence is MAKDDVIEVD…DKGRITFRYK (72 aa).

This sequence belongs to the IF-1 family. As to quaternary structure, component of the 30S ribosomal translation pre-initiation complex which assembles on the 30S ribosome in the order IF-2 and IF-3, IF-1 and N-formylmethionyl-tRNA(fMet); mRNA recruitment can occur at any time during PIC assembly.

It is found in the cytoplasm. One of the essential components for the initiation of protein synthesis. Stabilizes the binding of IF-2 and IF-3 on the 30S subunit to which N-formylmethionyl-tRNA(fMet) subsequently binds. Helps modulate mRNA selection, yielding the 30S pre-initiation complex (PIC). Upon addition of the 50S ribosomal subunit IF-1, IF-2 and IF-3 are released leaving the mature 70S translation initiation complex. The sequence is that of Translation initiation factor IF-1 from Nitratiruptor sp. (strain SB155-2).